Here is a 212-residue protein sequence, read N- to C-terminus: Thymidylate kinase (212 aa).

10 to 17 contributes to the ATP binding site; that stretch reads GPDGSGKS.

This sequence belongs to the thymidylate kinase family.

It catalyses the reaction dTMP + ATP = dTDP + ADP. In terms of biological role, phosphorylation of dTMP to form dTDP in both de novo and salvage pathways of dTTP synthesis. This Exiguobacterium sp. (strain ATCC BAA-1283 / AT1b) protein is Thymidylate kinase.